The sequence spans 524 residues: Bifunctional purine biosynthesis protein PurH (524 aa).

The region spanning 1–145 (MIKQALLSVS…KNHRDVTVIV (145 aa)) is the MGS-like domain.

The protein belongs to the PurH family.

The catalysed reaction is (6R)-10-formyltetrahydrofolate + 5-amino-1-(5-phospho-beta-D-ribosyl)imidazole-4-carboxamide = 5-formamido-1-(5-phospho-D-ribosyl)imidazole-4-carboxamide + (6S)-5,6,7,8-tetrahydrofolate. It catalyses the reaction IMP + H2O = 5-formamido-1-(5-phospho-D-ribosyl)imidazole-4-carboxamide. It participates in purine metabolism; IMP biosynthesis via de novo pathway; 5-formamido-1-(5-phospho-D-ribosyl)imidazole-4-carboxamide from 5-amino-1-(5-phospho-D-ribosyl)imidazole-4-carboxamide (10-formyl THF route): step 1/1. It functions in the pathway purine metabolism; IMP biosynthesis via de novo pathway; IMP from 5-formamido-1-(5-phospho-D-ribosyl)imidazole-4-carboxamide: step 1/1. The chain is Bifunctional purine biosynthesis protein PurH from Cupriavidus necator (strain ATCC 17699 / DSM 428 / KCTC 22496 / NCIMB 10442 / H16 / Stanier 337) (Ralstonia eutropha).